We begin with the raw amino-acid sequence, 208 residues long: Guanylate kinase (208 aa).

A Guanylate kinase-like domain is found at 4-181; it reads GLLIVISGPS…AVEKIQSIIS (178 aa). 11–18 is a binding site for ATP; sequence GPSGTGKG.

It belongs to the guanylate kinase family.

The protein resides in the cytoplasm. It catalyses the reaction GMP + ATP = GDP + ADP. Functionally, essential for recycling GMP and indirectly, cGMP. The polypeptide is Guanylate kinase (Clostridium tetani (strain Massachusetts / E88)).